A 147-amino-acid chain; its full sequence is Ribosome-binding factor A (147 aa).

A disordered region spans residues 122–147 (QQQFGSVDDDVIENDIEESDDTEGKV). Over residues 128–147 (VDDDVIENDIEESDDTEGKV) the composition is skewed to acidic residues.

This sequence belongs to the RbfA family. In terms of assembly, monomer. Binds 30S ribosomal subunits, but not 50S ribosomal subunits or 70S ribosomes.

It is found in the cytoplasm. Its function is as follows. One of several proteins that assist in the late maturation steps of the functional core of the 30S ribosomal subunit. Associates with free 30S ribosomal subunits (but not with 30S subunits that are part of 70S ribosomes or polysomes). Required for efficient processing of 16S rRNA. May interact with the 5'-terminal helix region of 16S rRNA. The chain is Ribosome-binding factor A from Shewanella oneidensis (strain ATCC 700550 / JCM 31522 / CIP 106686 / LMG 19005 / NCIMB 14063 / MR-1).